A 427-amino-acid chain; its full sequence is Rhodocoxin reductase (427 aa).

Position 2-34 (2-34 (SIVIIGSGQAGFEAAVSLRSHGFSGTITLVGDE)) interacts with FAD. 144-172 (SLVVIGAGFIGLEVAAAARKKGLDVTVVE) contributes to the NAD(+) binding site.

The protein belongs to the FAD-dependent oxidoreductase family. Requires FAD as cofactor.

Its function is as follows. The degradation of the thiocarbamate herbicide EPTC by cytochrome CYP116 (thcB) requires the participation of a flavoprotein, rhodocoxin reductase, and an iron-sulfur protein, rhodocoxin, to mediate the transfer of electrons from NADH to P450 for oxygen activation. In Rhodococcus erythropolis (Arthrobacter picolinophilus), this protein is Rhodocoxin reductase (thcD).